Reading from the N-terminus, the 202-residue chain is Small ribosomal subunit protein uS4 (202 aa).

Residues 23-42 form a disordered region; it reads RKNARRAYAPGQHGQARKKR. In terms of domain architecture, S4 RNA-binding spans 90–153; that stretch reads MRLDNTVFRL…RSQDLVKRNM (64 aa).

This sequence belongs to the universal ribosomal protein uS4 family. Part of the 30S ribosomal subunit. Contacts protein S5. The interaction surface between S4 and S5 is involved in control of translational fidelity.

Functionally, one of the primary rRNA binding proteins, it binds directly to 16S rRNA where it nucleates assembly of the body of the 30S subunit. Its function is as follows. With S5 and S12 plays an important role in translational accuracy. The polypeptide is Small ribosomal subunit protein uS4 (Microcystis aeruginosa (strain NIES-843 / IAM M-2473)).